Here is a 112-residue protein sequence, read N- to C-terminus: Class I hydrophobin 7 (112 aa).

A signal peptide spans 1 to 23 (MFARQATSVSAFLVLTLSLFAAA). 4 cysteine pairs are disulfide-bonded: Cys-36–Cys-93, Cys-43–Cys-87, Cys-44–Cys-74, and Cys-94–Cys-107. A glycan (N-linked (GlcNAc...) asparagine) is linked at Asn-96.

The protein belongs to the fungal hydrophobin family. As to quaternary structure, self-assembles to form functional amyloid fibrils called rodlets. Self-assembly into fibrillar rodlets occurs spontaneously at hydrophobic:hydrophilic interfaces and the rodlets further associate laterally to form amphipathic monolayers.

It localises to the secreted. It is found in the cell wall. Aerial growth, conidiation, and dispersal of filamentous fungi in the environment rely upon a capability of their secreting small amphipathic proteins called hydrophobins (HPBs) with low sequence identity. Class I can self-assemble into an outermost layer of rodlet bundles on aerial cell surfaces, conferring cellular hydrophobicity that supports fungal growth, development and dispersal; whereas Class II form highly ordered films at water-air interfaces through intermolecular interactions but contribute nothing to the rodlet structure. In Flammulina velutipes (Agaricus velutipes), this protein is Class I hydrophobin 7.